The sequence spans 450 residues: Plasminogen-binding protein PgbA (450 aa).

3 stretches are compositionally biased toward basic and acidic residues: residues 262–273 (EIKQEAIKEPKK), 284–310 (LEEK…DERK), and 317–362 (KAME…REIN). The segment at 262-450 (EIKQEAIKEP…RRKALEMNKK (189 aa)) is disordered. A compositionally biased stretch (polar residues) spans 363-386 (QESANEPSSENNATLKDTENTSVL). Over residues 389–450 (SAAKKEAPKP…RRKALEMNKK (62 aa)) the composition is skewed to basic and acidic residues.

The protein resides in the cell surface. In terms of biological role, binds plasminogen, specifically, and in a concentration and lysine-dependent manner. Plasminogen is the precursor of plasmin, a serine protease that cleaves fibrin, fibronectin, laminin and vitronectin. Acquisition of plasminogen/plasmin could enable H.pylori to degrade host components. The polypeptide is Plasminogen-binding protein PgbA (pgbA) (Helicobacter pylori (strain J99 / ATCC 700824) (Campylobacter pylori J99)).